The following is a 25-amino-acid chain: Omega conotoxin-CVIF (25 aa).

3 cysteine pairs are disulfide-bonded: cysteine 1–cysteine 16, cysteine 8–cysteine 20, and cysteine 15–cysteine 25. Cysteine amide is present on cysteine 25.

It belongs to the conotoxin O1 superfamily. In terms of tissue distribution, expressed by the venom duct.

It localises to the secreted. Its function is as follows. Omega-conotoxins act at presynaptic membranes, they bind and block voltage-gated calcium channels. This toxin blocks N-type calcium channels (Cav2.2/CACNA1B). It shows a higher potency when Cav2.2/CACNA1B is only expressed with the ancillary subunit CACNB3 (IC(50)=0.1 nM) than on Cav2.2/CACNA1B expressed with the ancillary subunits CACNA2D1 and CACNB3 (IC(50)=19.9 nM). The Cav2.2/CACNA1B block by this toxin is voltage-independent, whereas the recovery from toxin block is voltage-dependent. There is a low recovery at physiological membrane potential and a high recovery with hyperpolarized potential. This indicates that the toxin has a higher affinity for Cav2.2/CACNA1B in the inactivated state. It is noteworthy that ancillary subunits beta modulate recovery from this toxin block. Cav2.2/CACNA1B expressed with the ancillary subunit CACNB2a (isoform 2a) almost recover completely from this toxin block, whereas an expression with CACNB3 exhibits relatively weak recovery. Inhibition by this toxin of excitatory synaptic transmission is reversible. In vivo, when tested on rat model of persistent pain, this toxin blocks chronic pain behavior. The protein is Omega conotoxin-CVIF of Conus catus (Cat cone).